The primary structure comprises 371 residues: Tetraacyldisaccharide 4'-kinase (371 aa).

63-70 (AVGGAGKT) is an ATP binding site.

The protein belongs to the LpxK family.

The catalysed reaction is a lipid A disaccharide + ATP = a lipid IVA + ADP + H(+). The protein operates within glycolipid biosynthesis; lipid IV(A) biosynthesis; lipid IV(A) from (3R)-3-hydroxytetradecanoyl-[acyl-carrier-protein] and UDP-N-acetyl-alpha-D-glucosamine: step 6/6. Functionally, transfers the gamma-phosphate of ATP to the 4'-position of a tetraacyldisaccharide 1-phosphate intermediate (termed DS-1-P) to form tetraacyldisaccharide 1,4'-bis-phosphate (lipid IVA). The protein is Tetraacyldisaccharide 4'-kinase of Anaeromyxobacter sp. (strain Fw109-5).